Consider the following 270-residue polypeptide: 4-hydroxy-tetrahydrodipicolinate reductase (270 aa).

NAD(+) is bound by residues Gly8–Met13, Asp34, Gly102–Thr104, and Ser128–Tyr131. His160 acts as the Proton donor/acceptor in catalysis. His161 is a (S)-2,3,4,5-tetrahydrodipicolinate binding site. Lys164 acts as the Proton donor in catalysis. Residue Gly170–Thr171 participates in (S)-2,3,4,5-tetrahydrodipicolinate binding.

Belongs to the DapB family.

Its subcellular location is the cytoplasm. The enzyme catalyses (S)-2,3,4,5-tetrahydrodipicolinate + NAD(+) + H2O = (2S,4S)-4-hydroxy-2,3,4,5-tetrahydrodipicolinate + NADH + H(+). The catalysed reaction is (S)-2,3,4,5-tetrahydrodipicolinate + NADP(+) + H2O = (2S,4S)-4-hydroxy-2,3,4,5-tetrahydrodipicolinate + NADPH + H(+). It functions in the pathway amino-acid biosynthesis; L-lysine biosynthesis via DAP pathway; (S)-tetrahydrodipicolinate from L-aspartate: step 4/4. Its function is as follows. Catalyzes the conversion of 4-hydroxy-tetrahydrodipicolinate (HTPA) to tetrahydrodipicolinate. In Methanococcus maripaludis (strain C7 / ATCC BAA-1331), this protein is 4-hydroxy-tetrahydrodipicolinate reductase.